Here is a 201-residue protein sequence, read N- to C-terminus: 3-isopropylmalate dehydratase small subunit (201 aa).

It belongs to the LeuD family. LeuD type 1 subfamily. In terms of assembly, heterodimer of LeuC and LeuD.

It catalyses the reaction (2R,3S)-3-isopropylmalate = (2S)-2-isopropylmalate. It functions in the pathway amino-acid biosynthesis; L-leucine biosynthesis; L-leucine from 3-methyl-2-oxobutanoate: step 2/4. In terms of biological role, catalyzes the isomerization between 2-isopropylmalate and 3-isopropylmalate, via the formation of 2-isopropylmaleate. The protein is 3-isopropylmalate dehydratase small subunit of Brucella abortus (strain S19).